The primary structure comprises 391 residues: Phosphoglycerate kinase (391 aa).

Substrate contacts are provided by residues 21–23 (DLN), Arg-36, 59–62 (HLGR), Arg-113, and Arg-146. ATP-binding positions include Lys-197, Glu-319, and 345-348 (GGDT).

The protein belongs to the phosphoglycerate kinase family. In terms of assembly, monomer.

The protein resides in the cytoplasm. The catalysed reaction is (2R)-3-phosphoglycerate + ATP = (2R)-3-phospho-glyceroyl phosphate + ADP. Its pathway is carbohydrate degradation; glycolysis; pyruvate from D-glyceraldehyde 3-phosphate: step 2/5. This chain is Phosphoglycerate kinase, found in Shewanella sp. (strain ANA-3).